The primary structure comprises 304 residues: UDP-N-acetylenolpyruvoylglucosamine reductase (304 aa).

An FAD-binding PCMH-type domain is found at 31–196; sequence KVGGPADYLA…ISAKFNLKPG (166 aa). The active site involves R175. Catalysis depends on S225, which acts as the Proton donor. E295 is a catalytic residue.

It belongs to the MurB family. It depends on FAD as a cofactor.

It is found in the cytoplasm. It carries out the reaction UDP-N-acetyl-alpha-D-muramate + NADP(+) = UDP-N-acetyl-3-O-(1-carboxyvinyl)-alpha-D-glucosamine + NADPH + H(+). Its pathway is cell wall biogenesis; peptidoglycan biosynthesis. Its function is as follows. Cell wall formation. The sequence is that of UDP-N-acetylenolpyruvoylglucosamine reductase from Streptococcus thermophilus (strain ATCC BAA-491 / LMD-9).